A 319-amino-acid polypeptide reads, in one-letter code: tRNA-modifying protein YgfZ (319 aa).

2 residues coordinate folate: tryptophan 27 and tryptophan 189.

This sequence belongs to the tRNA-modifying YgfZ family.

Its subcellular location is the cytoplasm. In terms of biological role, folate-binding protein involved in regulating the level of ATP-DnaA and in the modification of some tRNAs. It is probably a key factor in regulatory networks that act via tRNA modification, such as initiation of chromosomal replication. The polypeptide is tRNA-modifying protein YgfZ (Buchnera aphidicola subsp. Schizaphis graminum (strain Sg)).